A 308-amino-acid polypeptide reads, in one-letter code: MESTYIFGHKSPDTDAINSAIIMAEFEKLNGNDSAKAYRLGKVNPETQYALDYFKAEAPELLTEDLTDKDVILVDHNEFQQSADTIESAKIRHVVDHHRIANFHTAAPLYYRAEPLGCTATILYKMFKEQGFEIKPQIASLMLSAIISDSLLFKSPTCTEQDKAAAQALENIAGVDAQEYGLEMLKAGASTVDKSPVEIINADAKTFNMGDYSVRIGQVNTVDVNEILARQAELEQAITETLSGAEYDIFVLVATDILNSDSTILVLGKDKDKIAKAFDVELDNNTAFLPGVVSRKKQIVPPITAALS.

His9, Asp13, Asp15, Asp75, His97, and Asp149 together coordinate Mn(2+).

The protein belongs to the PPase class C family. The cofactor is Mn(2+).

The protein localises to the cytoplasm. The catalysed reaction is diphosphate + H2O = 2 phosphate + H(+). This chain is Probable manganese-dependent inorganic pyrophosphatase, found in Staphylococcus carnosus (strain TM300).